The sequence spans 316 residues: Retinol dehydrogenase 12 (316 aa).

46–52 (GANTGIG) lines the NADP(+) pocket. Serine 175 is a substrate binding site. Residue tyrosine 200 is the Proton acceptor of the active site.

Belongs to the short-chain dehydrogenases/reductases (SDR) family. In terms of tissue distribution, widely expressed, mostly in retina, kidney, brain, skeletal muscle, pancreas and stomach.

Its subcellular location is the endoplasmic reticulum membrane. The enzyme catalyses all-trans-retinol + NADP(+) = all-trans-retinal + NADPH + H(+). It catalyses the reaction 11-cis-retinol + NADP(+) = 11-cis-retinal + NADPH + H(+). It carries out the reaction 9-cis-retinol + NADP(+) = 9-cis-retinal + NADPH + H(+). The catalysed reaction is a 4-hydroxynonen-1-ol + NADP(+) = a 4-hydroxynonenal + NADPH + H(+). The enzyme catalyses (E)-non-2-en-1-ol + NADP(+) = (E)-non-2-enal + NADPH + H(+). It catalyses the reaction (Z)-non-6-en-1-ol + NADP(+) = (Z)-non-6-enal + NADPH + H(+). It carries out the reaction nonan-1-ol + NADP(+) = nonanal + NADPH + H(+). It functions in the pathway cofactor metabolism; retinol metabolism. Retinoids dehydrogenase/reductase with a clear preference for NADP. Displays high activity towards 9-cis, 11-cis and all-trans-retinal. Shows very weak activity towards 13-cis-retinol. Also exhibits activity, albeit with lower affinity than for retinaldehydes, towards lipid peroxidation products (C9 aldehydes) such as 4-hydroxynonenal and trans-2-nonenal. May play an important function in photoreceptor cells to detoxify 4-hydroxynonenal and potentially other toxic aldehyde products resulting from lipid peroxidation. Has no dehydrogenase activity towards steroids. This chain is Retinol dehydrogenase 12 (RDH12), found in Homo sapiens (Human).